Consider the following 357-residue polypeptide: Ribosomal RNA large subunit methyltransferase M (357 aa).

Residues Ser-183, 216-219 (APGG), Asp-235, Asp-255, and Asp-271 contribute to the S-adenosyl-L-methionine site. Lys-300 acts as the Proton acceptor in catalysis.

It belongs to the class I-like SAM-binding methyltransferase superfamily. RNA methyltransferase RlmE family. RlmM subfamily. As to quaternary structure, monomer.

It is found in the cytoplasm. The enzyme catalyses cytidine(2498) in 23S rRNA + S-adenosyl-L-methionine = 2'-O-methylcytidine(2498) in 23S rRNA + S-adenosyl-L-homocysteine + H(+). In terms of biological role, catalyzes the 2'-O-methylation at nucleotide C2498 in 23S rRNA. The protein is Ribosomal RNA large subunit methyltransferase M of Pseudomonas syringae pv. tomato (strain ATCC BAA-871 / DC3000).